The sequence spans 348 residues: Rhodopsin (348 aa).

At 1–33 (TEGPYFYIPMVNTTGIVRSPYEYPQYYLVNPAA) the chain is on the extracellular side. The N-linked (GlcNAc...) asparagine glycan is linked to Asn12. Residues 34-58 (YAMLGAYMFFLIIVGFPVNFMTLYV) traverse the membrane as a helical segment. The Cytoplasmic portion of the chain corresponds to 59–70 (TLEHKKLRTPLN). A helical transmembrane segment spans residues 71 to 93 (YILLNLAVADLFMVIGGFTTTIY). At 94–107 (TSMHGYFVLGRLGC) the chain is on the extracellular side. An intrachain disulfide couples Cys107 to Cys184. The chain crosses the membrane as a helical span at residues 108 to 130 (NIEGFFATLGGMISLWSLAVLAI). The short motif at 131 to 133 (ERW) is the 'Ionic lock' involved in activated form stabilization element. Residues 131–149 (ERWVVVCKPISNFRFGENH) lie on the Cytoplasmic side of the membrane. The chain crosses the membrane as a helical span at residues 150–170 (AIMGVSLTWAMALACTVPPLV). The Extracellular portion of the chain corresponds to 171–199 (GWSRYIPEGMQCSCGIDYYTRAEGFNNES). N-linked (GlcNAc...) asparagine glycosylation occurs at Asn197. Residues 200-221 (FVLYMFFCHFTIPLTIIFFCYG) form a helical membrane-spanning segment. Over 222-249 (RLLCAVKEAAAAQQESETTQRAEREVTR) the chain is Cytoplasmic. Residues 250–271 (MVIIMVIGFLICWLPYASVAWF) form a helical membrane-spanning segment. Over 272–283 (IFTHQGSEFGPL) the chain is Extracellular. The helical transmembrane segment at 284 to 305 (FMTIPAFFAKSSSIYNPMIYIC) threads the bilayer. Lys293 bears the N6-(retinylidene)lysine mark. The Cytoplasmic segment spans residues 306–348 (MNKQFRHCMITTLFCGKNPFEGEEEGASSTKTEASSASSVSPA). Residue Cys320 is the site of S-palmitoyl cysteine attachment. Positions 327–348 (GEEEGASSTKTEASSASSVSPA) are disordered. Positions 332-348 (ASSTKTEASSASSVSPA) are enriched in low complexity.

This sequence belongs to the G-protein coupled receptor 1 family. Opsin subfamily. Phosphorylated on some or all of the serine and threonine residues present in the C-terminal region. In terms of processing, contains one covalently linked retinal chromophore.

The protein localises to the membrane. It is found in the cell projection. It localises to the cilium. Its subcellular location is the photoreceptor outer segment. Its function is as follows. Photoreceptor required for image-forming vision at low light intensity. While most salt water fish species use retinal as chromophore, most freshwater fish use 3-dehydroretinal, or a mixture of retinal and 3-dehydroretinal. Light-induced isomerization of 11-cis to all-trans retinal triggers a conformational change that activates signaling via G-proteins. Subsequent receptor phosphorylation mediates displacement of the bound G-protein alpha subunit by arrestin and terminates signaling. This is Rhodopsin (rho) from Sargocentron microstoma (Smallmouth squirrelfish).